The chain runs to 136 residues: Large ribosomal subunit protein uL16 (136 aa).

It belongs to the universal ribosomal protein uL16 family. In terms of assembly, part of the 50S ribosomal subunit.

In terms of biological role, binds 23S rRNA and is also seen to make contacts with the A and possibly P site tRNAs. The protein is Large ribosomal subunit protein uL16 of Elusimicrobium minutum (strain Pei191).